Consider the following 485-residue polypeptide: MTYLIKGETATWEVVVGLEVHAQVVSQSKLFSGSSTRFGAPANSQVSLVDAAMPGMLPVINGLCVEQAVRTGLGLRAKINKRSIFARKNYFYADLPQGYQISQYEQPIVGEGKVVLDMPDGSSREVGIERLHLEQDAGKSMHDQHPTKSLIDLNRSGVALMEIVSKPDMREPEEAGAYLRKLRSIMRYLGTCDGNMEEGSMRADVNVSVRPIGTTDLRTRCEIKNVNSVRFVMQAIEAEAHRQVEVWESGGEVRQETRLFDPAKGETRSMRSKEHAHDYRYFPDPDLLPLEFDDAFVEKVRRSLPELPDDKKNRFIADFGLTPYDASVLVVDRENAAFFEKVAEGRDGKTAANWVINNLFGALAKAGKGVADSPVSAENLGKLLDLLKDEVINGRIAKDVFEIMMETGEDPDAIVEDKGLRQVTDTSAIEAAVDAVIAANPEKADDVRGGKEKLLGWFVGQVMKATQGKANPAMLNDILRAKLLG.

Belongs to the GatB/GatE family. GatB subfamily. Heterotrimer of A, B and C subunits.

The catalysed reaction is L-glutamyl-tRNA(Gln) + L-glutamine + ATP + H2O = L-glutaminyl-tRNA(Gln) + L-glutamate + ADP + phosphate + H(+). The enzyme catalyses L-aspartyl-tRNA(Asn) + L-glutamine + ATP + H2O = L-asparaginyl-tRNA(Asn) + L-glutamate + ADP + phosphate + 2 H(+). Functionally, allows the formation of correctly charged Asn-tRNA(Asn) or Gln-tRNA(Gln) through the transamidation of misacylated Asp-tRNA(Asn) or Glu-tRNA(Gln) in organisms which lack either or both of asparaginyl-tRNA or glutaminyl-tRNA synthetases. The reaction takes place in the presence of glutamine and ATP through an activated phospho-Asp-tRNA(Asn) or phospho-Glu-tRNA(Gln). The sequence is that of Aspartyl/glutamyl-tRNA(Asn/Gln) amidotransferase subunit B from Rhodospirillum rubrum (strain ATCC 11170 / ATH 1.1.1 / DSM 467 / LMG 4362 / NCIMB 8255 / S1).